The sequence spans 252 residues: Small ribosomal subunit protein eS4 (252 aa).

The region spanning 43-106 (LPLLILVRDM…NKYYRVIPVP (64 aa)) is the S4 RNA-binding domain.

The protein belongs to the eukaryotic ribosomal protein eS4 family.

This Desulfurococcus amylolyticus (strain DSM 18924 / JCM 16383 / VKM B-2413 / 1221n) (Desulfurococcus kamchatkensis) protein is Small ribosomal subunit protein eS4.